We begin with the raw amino-acid sequence, 432 residues long: Short/branched chain specific acyl-CoA dehydrogenase, mitochondrial (432 aa).

The N-terminal 33 residues, 1-33, are a transit peptide targeting the mitochondrion; sequence MAVSAFQLWRAGGLLRRNFLTHSSSWKIPPRVL. Lysine 70 bears the N6-acetyllysine; alternate mark. Position 70 is an N6-succinyllysine; alternate (lysine 70). FAD contacts are provided by residues 174–183 and 207–209; these read FCLSEAGAGS and WIS. Substrate is bound at residue serine 183. Residue serine 183 is modified to Phosphoserine. Tyrosine 229 contacts substrate. N6-succinyllysine is present on lysine 278. Tyrosine 283 is a binding site for substrate. N6-acetyllysine; alternate is present on lysine 284. Lysine 284 carries the post-translational modification N6-succinyllysine; alternate. Residue 291 to 294 participates in substrate binding; it reads NEGR. FAD is bound by residues arginine 319, glutamine 330, and 387 to 391; that span reads EWMGG. Residue glutamate 414 is the Proton acceptor of the active site. 416 to 418 is a binding site for FAD; it reads TSN. Lysine 426 is modified (N6-acetyllysine).

This sequence belongs to the acyl-CoA dehydrogenase family. Homotetramer. Requires FAD as cofactor. As to expression, ubiquitously expressed.

The protein resides in the mitochondrion matrix. It catalyses the reaction 2-methylbutanoyl-CoA + oxidized [electron-transfer flavoprotein] + H(+) = (2E)-2-methylbut-2-enoyl-CoA + reduced [electron-transfer flavoprotein]. The catalysed reaction is (2S)-2-methylbutanoyl-CoA + oxidized [electron-transfer flavoprotein] + H(+) = (2E)-2-methylbut-2-enoyl-CoA + reduced [electron-transfer flavoprotein]. It carries out the reaction (2R)-2-methylbutanoyl-CoA + oxidized [electron-transfer flavoprotein] + H(+) = ethylacryloyl-CoA + reduced [electron-transfer flavoprotein]. The enzyme catalyses butanoyl-CoA + oxidized [electron-transfer flavoprotein] + H(+) = (2E)-butenoyl-CoA + reduced [electron-transfer flavoprotein]. It catalyses the reaction 2-methylpropanoyl-CoA + oxidized [electron-transfer flavoprotein] + H(+) = 2-methylpropenoyl-CoA + reduced [electron-transfer flavoprotein]. The catalysed reaction is hexanoyl-CoA + oxidized [electron-transfer flavoprotein] + H(+) = (2E)-hexenoyl-CoA + reduced [electron-transfer flavoprotein]. It carries out the reaction valproyl-CoA + oxidized [electron-transfer flavoprotein] + H(+) = (2E)-2-propylpent-2-enoyl-CoA + reduced [electron-transfer flavoprotein]. It participates in lipid metabolism; mitochondrial fatty acid beta-oxidation. It functions in the pathway amino-acid degradation; L-isoleucine degradation. With respect to regulation, inhibited by N-ethylmaleimide, hydroxymercuribenzoate, methyl mercury iodide and heavy metals such as Hg2+, Cu2+, and Ag2+. In terms of biological role, short and branched chain specific acyl-CoA dehydrogenase that catalyzes the removal of one hydrogen from C-2 and C-3 of the fatty acyl-CoA thioester, resulting in the formation of trans-2-enoyl-CoA. Among the different mitochondrial acyl-CoA dehydrogenases, acts specifically on short and branched chain acyl-CoA derivatives such as (S)-2-methylbutyryl-CoA as well as short straight chain acyl-CoAs such as butyryl-CoA. Plays an important role in the metabolism of L-isoleucine by catalyzing the dehydrogenation of 2-methylbutyryl-CoA, one of the steps of the L-isoleucine catabolic pathway. Can also act on valproyl-CoA, a metabolite of the valproic acid drug. The protein is Short/branched chain specific acyl-CoA dehydrogenase, mitochondrial of Rattus norvegicus (Rat).